The following is a 174-amino-acid chain: RNA pyrophosphohydrolase (174 aa).

The Nudix hydrolase domain occupies 6–149 (GYRPNVGIIL…KRDVYLGALK (144 aa)). The Nudix box motif lies at 38–59 (GGIKPGESPETAMYRELYEEVG).

It belongs to the Nudix hydrolase family. RppH subfamily. The cofactor is a divalent metal cation.

Its function is as follows. Accelerates the degradation of transcripts by removing pyrophosphate from the 5'-end of triphosphorylated RNA, leading to a more labile monophosphorylated state that can stimulate subsequent ribonuclease cleavage. The sequence is that of RNA pyrophosphohydrolase from Neisseria meningitidis serogroup C (strain 053442).